The sequence spans 87 residues: Apolipoprotein C-I (87 aa).

The signal sequence occupies residues 1–26 (MRLFLSLPVLVVVLAMVLEGPAPAQA).

It belongs to the apolipoprotein C1 family.

Its subcellular location is the secreted. Inhibitor of lipoprotein binding to the low density lipoprotein (LDL) receptor, LDL receptor-related protein, and very low density lipoprotein (VLDL) receptor. Associates with high density lipoproteins (HDL) and the triacylglycerol-rich lipoproteins in the plasma and makes up about 10% of the protein of the VLDL and 2% of that of HDL. Appears to interfere directly with fatty acid uptake and is also the major plasma inhibitor of cholesteryl ester transfer protein (CETP). Binds free fatty acids and reduces their intracellular esterification. Modulates the interaction of APOE with beta-migrating VLDL and inhibits binding of beta-VLDL to the LDL receptor-related protein. The polypeptide is Apolipoprotein C-I (APOC1) (Zalophus californianus (California sealion)).